Consider the following 589-residue polypeptide: PTS system mannitol-specific EIICB component (589 aa).

Topologically, residues 1–25 (MERKSSLKVRVQKLGTSLSNMVMPN) are cytoplasmic. The PTS EIIC type-2 domain maps to 14–347 (LGTSLSNMVM…ILKSDNSDDD (334 aa)). A helical transmembrane segment spans residues 26–47 (IGAFIAWGVAASLFIATGYLPN). The Extracellular portion of the chain corresponds to 48-51 (KALD). Residues 52-73 (TNVVGPMLKYVLPLLIGYTGGY) form a helical membrane-spanning segment. Residues 74–136 (NIHKQRGGVI…TGFEMLVNNF (63 aa)) lie on the Cytoplasmic side of the membrane. Residues 137–158 (SLGLIGFALMVLAFFVIGPVVA) form a helical membrane-spanning segment. The Extracellular segment spans residues 159–167 (QLTEWVGIG). A helical transmembrane segment spans residues 168 to 188 (VEAIVKVHLLPLANLIIEPAK). The Cytoplasmic portion of the chain corresponds to 189-275 (ILFLNNALNH…VMMKPAMFLA (87 aa)). Residues 276-295 (VIAGGLTGTFTFQTLGAGLT) traverse the membrane as a helical segment. Residues 296 to 317 (APASPGSIIAIMGMSPKGWGPH) lie on the Extracellular side of the membrane. The helical transmembrane segment at 318 to 339 (LVVLAGVFAAAVASFLVASIIL) threads the bilayer. Over 340–589 (KSDNSDDDSL…YDKLVARMHK (250 aa)) the chain is Cytoplasmic. Residues 383–478 (HQIIFACDAG…SLTNGKASGS (96 aa)) enclose the PTS EIIB type-2 domain. The Phosphocysteine intermediate; for EIIB activity role is filled by C389. At C389 the chain carries Phosphocysteine; by EIIA.

Homodimer.

It is found in the cell membrane. It catalyses the reaction D-mannitol(out) + N(pros)-phospho-L-histidyl-[protein] = D-mannitol 1-phosphate(in) + L-histidyl-[protein]. In terms of biological role, the phosphoenolpyruvate-dependent sugar phosphotransferase system (sugar PTS), a major carbohydrate active transport system, catalyzes the phosphorylation of incoming sugar substrates concomitantly with their translocation across the cell membrane. The enzyme II CmtAB PTS system is involved in D-mannitol transport. The polypeptide is PTS system mannitol-specific EIICB component (Streptococcus mutans serotype c (strain ATCC 700610 / UA159)).